The sequence spans 152 residues: Small ribosomal subunit protein uS15 (152 aa).

The tract at residues 1-20 is disordered; that stretch reads MNKRRANGSSHSTRPVRTGS.

It belongs to the universal ribosomal protein uS15 family. Part of the 30S ribosomal subunit.

The protein is Small ribosomal subunit protein uS15 of Metallosphaera sedula (strain ATCC 51363 / DSM 5348 / JCM 9185 / NBRC 15509 / TH2).